The following is a 143-amino-acid chain: Interleukin-3 (143 aa).

Positions 1–23 (MSSFPILHLLLLLLGCQVPQAQG) are cleaved as a signal peptide. The N-linked (GlcNAc...) asparagine glycan is linked to asparagine 79.

It belongs to the IL-3 family. In terms of assembly, monomer.

The protein resides in the secreted. Granulocyte/macrophage colony-stimulating factors are cytokines that act in hematopoiesis by controlling the production, differentiation, and function of 2 related white cell populations of the blood, the granulocytes and the monocytes-macrophages. In terms of biological role, this CSF induces granulocytes, macrophages, mast cells, stem cells, erythroid cells, eosinophils and megakaryocytes. This Canis lupus familiaris (Dog) protein is Interleukin-3 (IL3).